A 130-amino-acid chain; its full sequence is WAP four-disulfide core domain protein 3 (130 aa).

The signal sequence occupies residues 1–16; that stretch reads MKALLALGFLASWVAA. 2 consecutive WAP domains span residues 17–61 and 62–106; these read GEHA…RGDI and EGGR…IPGL. Intrachain disulfides connect Cys-25-Cys-49, Cys-32-Cys-53, Cys-36-Cys-48, Cys-42-Cys-57, Cys-69-Cys-94, Cys-77-Cys-98, Cys-81-Cys-93, and Cys-87-Cys-102. An N-linked (GlcNAc...) asparagine glycan is attached at Asn-116.

It localises to the secreted. In Mus musculus (Mouse), this protein is WAP four-disulfide core domain protein 3 (Wfdc3).